Consider the following 104-residue polypeptide: Large ribosomal subunit protein uL24 (104 aa).

This sequence belongs to the universal ribosomal protein uL24 family. As to quaternary structure, part of the 50S ribosomal subunit.

Functionally, one of two assembly initiator proteins, it binds directly to the 5'-end of the 23S rRNA, where it nucleates assembly of the 50S subunit. One of the proteins that surrounds the polypeptide exit tunnel on the outside of the subunit. The polypeptide is Large ribosomal subunit protein uL24 (Bartonella quintana (strain Toulouse) (Rochalimaea quintana)).